We begin with the raw amino-acid sequence, 531 residues long: UDP-glucuronosyltransferase 1A3 (531 aa).

An N-terminal signal peptide occupies residues 1–25; the sequence is MGIQGFLQKLSGLLLLLCALPWAEG. N-linked (GlcNAc...) asparagine glycosylation is found at Asn116, Asn139, Asn293, and Asn431. A helical transmembrane segment spans residues 489–505; sequence VIGFLLAIVLTVVFIVY.

This sequence belongs to the UDP-glycosyltransferase family. As to quaternary structure, homodimers. Homooligomer. Interacts with UGT1A1, UGT1A4, UGT1A6, UGT1A7, UGT1A8, UGT1A9 and UGT1A10 to form heterodimers.

It is found in the endoplasmic reticulum membrane. The enzyme catalyses glucuronate acceptor + UDP-alpha-D-glucuronate = acceptor beta-D-glucuronoside + UDP + H(+). It carries out the reaction 17beta-estradiol + UDP-alpha-D-glucuronate = 17beta-estradiol 3-O-(beta-D-glucuronate) + UDP + H(+). The catalysed reaction is 17beta-estradiol + UDP-alpha-D-glucuronate = 17beta-estradiol 17-O-(beta-D-glucuronate) + UDP + H(+). It catalyses the reaction 17alpha-estradiol + UDP-alpha-D-glucuronate = 17alpha-estradiol 3-O-(beta-D-glucuronate) + UDP + H(+). The enzyme catalyses estrone + UDP-alpha-D-glucuronate = estrone 3-O-(beta-D-glucuronate) + UDP + H(+). It carries out the reaction chenodeoxycholate + UDP-alpha-D-glucuronate = chenodeoxycholoyl-24-O-(beta-D-glucuronate) + UDP. The catalysed reaction is deoxycholate + UDP-alpha-D-glucuronate = deoxycholoyl-24-O-(beta-D-glucuronate) + UDP. It catalyses the reaction lithocholate + UDP-alpha-D-glucuronate = lithocholoyl-24-O-(beta-D-glucuronate) + UDP. The enzyme catalyses hyodeoxycholate + UDP-alpha-D-glucuronate = hyodeoxycholoyl-24-O-(beta-D-glucuronate) + UDP. It carries out the reaction hyocholate + UDP-alpha-D-glucuronate = hyocholoyl-24-O-(beta-D-glucuronate) + UDP. The catalysed reaction is calcidiol + UDP-alpha-D-glucuronate = calcidiol 25-O-(beta-D-glucuronide) + UDP + H(+). It catalyses the reaction losartan + UDP-alpha-D-glucuronate = losartan-2-N-beta-D-glucuronide + UDP. The enzyme catalyses candesartan + UDP-alpha-D-glucuronate = candesartan-2-N-beta-D-glucuronide + UDP. It carries out the reaction zolasartan + UDP-alpha-D-glucuronate = zolarsartan-2-N-beta-D-glucuronide + UDP. The catalysed reaction is (E)-ferulate + UDP-alpha-D-glucuronate = (E)-4-O-(beta-D-glucuronosyl)-ferulate + UDP + H(+). It catalyses the reaction (E)-ferulate + UDP-alpha-D-glucuronate = (E)-ferulic acid beta-D-glucuronate ester + UDP. Its function is as follows. UDP-glucuronosyltransferase (UGT) that catalyzes phase II biotransformation reactions in which lipophilic substrates are conjugated with glucuronic acid to increase the metabolite's water solubility, thereby facilitating excretion into either the urine or bile. Essential for the elimination and detoxification of drugs, xenobiotics and endogenous compounds. Catalyzes the glucuronidation of endogenous estrogen hormones such as estradiol and estrone. Contributes to bile acid (BA) detoxification by catalyzing the glucuronidation of BA substrates, which are natural detergents for dietary lipids absorption. Involved in the glucuronidation of calcidiol, which is the major circulating form of vitamin D3, essential for the regulation of calcium and phosphate homeostasis. Involved in the glucuronidation of the phytochemical ferulic acid at the phenolic or the carboxylic acid group. Involved in the glucuronidation of the AGTR1 angiotensin receptor antagonists losartan, candesartan and zolarsartan, which can inhibit the effect of angiotensin II. The polypeptide is UDP-glucuronosyltransferase 1A3 (Rattus norvegicus (Rat)).